A 427-amino-acid polypeptide reads, in one-letter code: Protein king tubby 1 (427 aa).

A disordered region spans residues 48–174 (SPSNPDQIIS…ASGHNDAEGD (127 aa)). Residues 57–86 (SSSGSPTTVTATGTGTTTTTGSVTTTPTSP) show a composition bias toward low complexity.

It belongs to the TUB family.

It localises to the cytoplasm. Its subcellular location is the nucleus. This chain is Protein king tubby 1 (king-tubby1), found in Culex quinquefasciatus (Southern house mosquito).